A 380-amino-acid chain; its full sequence is Beta sliding clamp (380 aa).

Belongs to the beta sliding clamp family. In terms of assembly, forms a ring-shaped head-to-tail homodimer around DNA which binds and tethers DNA polymerases and other proteins to the DNA. The DNA replisome complex has a single clamp-loading complex (3 tau and 1 each of delta, delta', psi and chi subunits) which binds 3 Pol III cores (1 core on the leading strand and 2 on the lagging strand) each with a beta sliding clamp dimer. Additional proteins in the replisome are other copies of gamma, psi and chi, Ssb, DNA helicase and RNA primase.

The protein resides in the cytoplasm. In terms of biological role, confers DNA tethering and processivity to DNA polymerases and other proteins. Acts as a clamp, forming a ring around DNA (a reaction catalyzed by the clamp-loading complex) which diffuses in an ATP-independent manner freely and bidirectionally along dsDNA. Initially characterized for its ability to contact the catalytic subunit of DNA polymerase III (Pol III), a complex, multichain enzyme responsible for most of the replicative synthesis in bacteria; Pol III exhibits 3'-5' exonuclease proofreading activity. The beta chain is required for initiation of replication as well as for processivity of DNA replication. The sequence is that of Beta sliding clamp (dnaN) from Halalkalibacterium halodurans (strain ATCC BAA-125 / DSM 18197 / FERM 7344 / JCM 9153 / C-125) (Bacillus halodurans).